A 179-amino-acid polypeptide reads, in one-letter code: Ribosome maturation factor RimM (179 aa).

The region spanning 100–176 (KEEFHLLELI…FIIINPPNGL (77 aa)) is the PRC barrel domain.

It belongs to the RimM family. Binds ribosomal protein uS19.

Its subcellular location is the cytoplasm. In terms of biological role, an accessory protein needed during the final step in the assembly of 30S ribosomal subunit, possibly for assembly of the head region. Essential for efficient processing of 16S rRNA. May be needed both before and after RbfA during the maturation of 16S rRNA. It has affinity for free ribosomal 30S subunits but not for 70S ribosomes. This is Ribosome maturation factor RimM from Prochlorococcus marinus (strain MIT 9215).